The sequence spans 231 residues: ADP-ribosylation factor-like protein 6-interacting protein 4 (231 aa).

The segment covering 1-19 (MAHVSSRKRSRSRSRSRGR) has biased composition (basic residues). The disordered stretch occupies residues 1–154 (MAHVSSRKRS…EDNDGPVLTD (154 aa)). The segment covering 20–34 (RGSEKRSKRSSKDSS) has biased composition (basic and acidic residues). Positions 64–89 (TSRSSSSSSSSSSSSSSSSTSSSSSS) are enriched in low complexity. Positions 92–119 (RKKRGKHKDKKKRKKKKKRKKKMKRKGK) are enriched in basic residues. Serine 142 and serine 176 each carry phosphoserine. Lysine 193 participates in a covalent cross-link: Glycyl lysine isopeptide (Lys-Gly) (interchain with G-Cter in SUMO2).

The protein belongs to the ARL6IP4 family. Interacts with ARL6. Interacts with ZCCHC17. Interacts with SRSF2.

The protein localises to the nucleus. Its subcellular location is the nucleolus. The protein resides in the nucleus speckle. In terms of biological role, involved in modulating alternative pre-mRNA splicing with either 5' distal site activation or preferential use of 3' proximal site. In Rattus norvegicus (Rat), this protein is ADP-ribosylation factor-like protein 6-interacting protein 4 (Arl6ip4).